We begin with the raw amino-acid sequence, 134 residues long: Small ribosomal subunit protein uS8c (134 aa).

It belongs to the universal ribosomal protein uS8 family. In terms of assembly, part of the 30S ribosomal subunit.

The protein localises to the plastid. It is found in the chloroplast. In terms of biological role, one of the primary rRNA binding proteins, it binds directly to 16S rRNA central domain where it helps coordinate assembly of the platform of the 30S subunit. The sequence is that of Small ribosomal subunit protein uS8c (rps8) from Pelargonium hortorum (Common geranium).